Consider the following 228-residue polypeptide: MNIITTTTTDTTTALLRLMAWLSPVFPVGSFSYSHGLERAVHDGYVADTATMSDWLRWLVTRGSGWNDAVLCAESWRRAVAKGDLVEVAELAEALAGSRERHMETMLQGEAFLAAARSWPSSVFDRLPADCPYPVAVGAVAGANKVSLGLTLAAFLQAFCINLLQASIRLSVMGQNGVTATMSDLEPVLAETATRIEKTSLSDLGSATYISDIMAMKHETQHSRLFRT.

Belongs to the UreF family. In terms of assembly, ureD, UreF and UreG form a complex that acts as a GTP-hydrolysis-dependent molecular chaperone, activating the urease apoprotein by helping to assemble the nickel containing metallocenter of UreC. The UreE protein probably delivers the nickel.

It localises to the cytoplasm. Its function is as follows. Required for maturation of urease via the functional incorporation of the urease nickel metallocenter. The protein is Urease accessory protein UreF 1 of Brucella anthropi (strain ATCC 49188 / DSM 6882 / CCUG 24695 / JCM 21032 / LMG 3331 / NBRC 15819 / NCTC 12168 / Alc 37) (Ochrobactrum anthropi).